The primary structure comprises 340 residues: Zinc finger protein 367 (340 aa).

Residues 101-140 form a disordered region; sequence GAPQSSASVAAVSGGEDEEEASSPDSGHLKDGIRRGRPRA. Basic and acidic residues predominate over residues 127–140; sequence GHLKDGIRRGRPRA. C2H2-type zinc fingers lie at residues 157-179 and 185-209; these read IRCN…KRTH and YLCD…QRLH. Residues 280–317 form a disordered region; the sequence is KGKLVQKADQEQQDPLEYLQSDEEDDEKSGAQRRLQEQ. Positions 299 to 332 form a coiled coil; that stretch reads QSDEEDDEKSGAQRRLQEQRERLHGALALIELAN. Phosphoserine is present on Ser300. A compositionally biased stretch (basic and acidic residues) spans 307 to 317; the sequence is KSGAQRRLQEQ.

It belongs to the krueppel C2H2-type zinc-finger protein family. In terms of tissue distribution, expressed in bone marrow and ovary.

It localises to the nucleus. Transcriptional activator. Isoform 1 may be involved in transcriptional activation of erythroid genes. The sequence is that of Zinc finger protein 367 (Znf367) from Mus musculus (Mouse).